A 4293-amino-acid polypeptide reads, in one-letter code: Polycystin-1 (4293 aa).

The first 23 residues, 1–23 (MPLGAPALLALALGLGLWLGALA), serve as a signal peptide directing secretion. One can recognise an LRRNT domain in the interval 24–67 (GDPGRGCGPCPLPCFCGPAPDAACRVNCSGRWLQTLGPSLRIPA). At 24–3066 (GDPGRGCGPC…IFPEPSASIN (3043 aa)) the chain is on the extracellular side. N-linked (GlcNAc...) asparagine glycans are attached at residues Asn50 and Asn89. LRR repeat units lie at residues 68 to 91 (DATA…VNLS) and 92 to 113 (ALVE…VFAN). Asn116 and Asn121 each carry an N-linked (GlcNAc...) asparagine glycan. Residues 125–178 (NPFECNCGLAWLPRWAKEHQVHVVQSEATTCRGPIPLAGQPLLSIPLLDNACGE) form the LRRCT domain. One can recognise a WSC domain in the interval 177 to 271 (GEEYVACLPD…PTLLQHTFPA (95 aa)). Asn187 and Asn239 each carry an N-linked (GlcNAc...) asparagine glycan. A PKD 1 domain is found at 272–359 (SPGATLVGPH…VQVEATPTVL (88 aa)). Asn370 carries N-linked (GlcNAc...) asparagine glycosylation. The 116-residue stretch at 415–530 (GNGHCYRLVA…CSAPHSYVCE (116 aa)) folds into the C-type lectin domain. 2 disulfides stabilise this stretch: Cys436–Cys529 and Cys507–Cys521. The tract at residues 613 to 632 (GGAAAVPEGSSEPDNRTEPA) is disordered. An N-linked (GlcNAc...) asparagine glycan is attached at Asn627. One can recognise an LDL-receptor class A; atypical domain in the interval 633–666 (PKCVPEELWCPGANVCIPFDASCNSHVCINGSVS). Intrachain disulfides connect Cys635–Cys648 and Cys642–Cys660. Asn662, Asn740, Asn804, Asn835, Asn848, Asn859, Asn884, Asn915, Asn998, Asn1004, Asn1028, Asn1084, Asn1096, Asn1107, Asn1172, Asn1188, Asn1234, Asn1263, Asn1330, Asn1342, Asn1376, Asn1444, Asn1449, Asn1468, Asn1535, Asn1548, Asn1557, Asn1643, Asn1657, Asn1706, Asn1730, Asn1788, Asn1831, Asn1863, and Asn1876 each carry an N-linked (GlcNAc...) asparagine glycan. 15 PKD domains span residues 849–922 (ATAT…RVTA), 929–1014 (LRAV…NKMH), 1017–1123 (WVSA…LPNV), 1121–1209 (PNVA…LHGL), 1207–1292 (HGLT…EVLH), 1288–1377 (LEVL…IRNI), 1376–1463 (NITL…VLVT), 1462–1545 (VTGI…VRGL), 1544–1629 (GLTI…IEGL), 1630–1718 (QVAG…VESL), 1716–1802 (ESLI…VGGL), 1804–1886 (IRTS…IVNL), 1885–1970 (NLML…VVGL), 1972–2053 (VPNC…MVEV), and 2056–2144 (IIQY…ACRE). 18 N-linked (GlcNAc...) asparagine glycosylation sites follow: Asn1987, Asn2046, Asn2070, Asn2121, Asn2244, Asn2349, Asn2391, Asn2408, Asn2414, Asn2563, Asn2640, Asn2713, Asn2749, Asn2813, Asn2836, Asn2873, Asn2948, and Asn2986. The REJ domain maps to 2142–2828 (CREPEVEVAL…QLIFLVDSNP (687 aa)). The region spanning 2857–3055 (PIEQLAAERA…SLFVPPSHVQ (199 aa)) is the GAIN-B domain. The cysteines at positions 3007 and 3035 are disulfide-linked. Residues 3007-3055 (CQYFSEEMMMWRTEGIVPLEETSPSQAVCLTRHLTAFGASLFVPPSHVQ) form a GPS region. Residues 3067–3087 (YIVLLTCVICLVTYVVMAMIL) form a helical membrane-spanning segment. Residues 3088–3269 (RKLDQLDVSR…DRPPRSRFTR (182 aa)) are Cytoplasmic-facing. The PLAT domain occupies 3110 to 3225 (FKYEILVKTG…EANGGLVEKE (116 aa)). A helical transmembrane segment spans residues 3270–3290 (VQRVTCCVLLLCLFLAANAVW). Over 3291 to 3315 (YGVVRDTTYSMGPVSSLISPGVDTV) the chain is Extracellular. A helical membrane pass occupies residues 3316 to 3336 (AIGLVSSVVVYPVYLAVLFLF). The Cytoplasmic portion of the chain corresponds to 3337–3549 (RMSRSKVSGD…LPAWCAPLAH (213 aa)). Residues 3550–3570 (GLSLLLVAVAVAVSGWIGASF) traverse the membrane as a helical segment. The Extracellular portion of the chain corresponds to 3571–3572 (PP). A helical membrane pass occupies residues 3573-3593 (SVSVMWLLSSSSSFLASFLGW). At 3594–3655 (EPLKVLLEAL…LAKEEARKVK (62 aa)) the chain is on the cytoplasmic side. Residues 3656–3676 (RLHDMLKRLLVYMLFLLVTLL) traverse the membrane as a helical segment. Residues 3677–3891 (ANYGDASCHG…RLSTGLSLPL (215 aa)) are Extracellular-facing. N-linked (GlcNAc...) asparagine glycans are attached at residues Asn3728 and Asn3780. A helical membrane pass occupies residues 3892–3912 (LTSVCLLLFALYFSMAEVQTW). Over 3913–3925 (RKDGCACTARPDT) the chain is Cytoplasmic. Residues 3926–3946 (WARCLLVILTAATGLVRLAQL) traverse the membrane as a helical segment. Over 3947-3974 (GIADRQWTHFVQDHPRHFTSFDQVAQLG) the chain is Extracellular. Residues 3975–3995 (SVARGLAASLLFLLLVKAAQQ) traverse the membrane as a helical segment. Residues 3996–4017 (LRFVRQWSVFGKTLCRALPELM) lie on the Cytoplasmic side of the membrane. A helical transmembrane segment spans residues 4018–4038 (GATLGLVLLGVAYAQMAILLI). The Extracellular portion of the chain corresponds to 4039–4080 (SSGADTLYNMARAFLVLCPGARVPTLCPSESWYLSPLLCVGL). A helical membrane pass occupies residues 4081–4100 (WALRVWGALRLGAILLRWRY). Topologically, residues 4101-4293 (HALRGELYRP…PNNKVHPSST (193 aa)) are cytoplasmic. Disordered stretches follow at residues 4150-4197 (PLPS…STLK) and 4235-4293 (SLQG…PSST). Residues 4153 to 4172 (SRSSRGSKSSPVVLPPSSGS) are compositionally biased toward low complexity. Residue Ser4156 is modified to Phosphoserine; by PRKX; in vitro. Over residues 4173–4195 (EASHPSTSSSQPDGPSASLSRST) the composition is skewed to polar residues. A coiled-coil region spans residues 4210-4241 (ESLLVQFDRLNQATEDVYQLEQQLQSLQGHGH). Residues 4238–4256 (GHGHNGPPSSPSPGCFPGS) are compositionally biased toward low complexity. Positions 4265–4276 (SRASQGLDQTVG) are enriched in polar residues.

It belongs to the polycystin family. Component of the heterotetrameric polycystin channel complex with PKD2; the tetramer contains one PKD1 chain and three PKD2 chains. Interacts with PKD2; the interaction is required for ciliary localization. Interacts with PKD2L1. Interacts with PRKX; involved in differentiation and controlled morphogenesis of the kidney. Interacts (via extracellular domain) with WNT3A, WNT4 and WNT9B. Interacts with WNT5A, DVL1 and DVL2. Interacts with NPHP1 (via SH3 domain). Interacts with BBS1, BBS4, BBS5 and TTC8. Interacts with RGS7. Interacts (via C-terminal domain) with RABEP1; the interaction connects PKD1:PKD2 to GGA1 and ARL3 that mediate the ciliary targeting. Interacts (via the PKD repeats in the N-terminal extracellular region) with EPCIP; the interaction is not dependent on N-glycosylation of either protein. N-glycosylated. Post-translationally, after synthesis, undergoes autoproteolytic cleavage between Leu-3040 and Thr-3041 in the GPS region of the GAIN-B domain. Cleavage at the GPS region occurs through a cis-autoproteolytic mechanism involving an ester-intermediate via N-O acyl rearrangement. This process takes place in the early secretory pathway, depends on initial N-glycosylation, and requires the REJ domain. PKD1 is ubiquitously and incompletely cleaved in wild-type mice, so that uncleaved and cleaved PKD1 molecules coexist. The differential patterns of cleavage during embryonic development, as well as in adult mice, suggest different functions of uncleaved and cleaved molecules.

It is found in the cell membrane. Its subcellular location is the cell projection. The protein localises to the cilium. The protein resides in the endoplasmic reticulum. It localises to the golgi apparatus. It is found in the vesicle. Its subcellular location is the secreted. The protein localises to the extracellular exosome. In terms of biological role, component of a heteromeric calcium-permeable ion channel formed by PKD1 and PKD2 that is activated by interaction between PKD1 and a Wnt family member, such as WNT3A and WNT9B. Both PKD1 and PKD2 are required for channel activity. Involved in renal tubulogenesis. Involved in fluid-flow mechanosensation by the primary cilium in renal epithelium. Acts as a regulator of cilium length, together with PKD2. The dynamic control of cilium length is essential in the regulation of mechanotransductive signaling. The cilium length response creates a negative feedback loop whereby fluid shear-mediated deflection of the primary cilium, which decreases intracellular cAMP, leads to cilium shortening and thus decreases flow-induced signaling. May be an ion-channel regulator. Involved in adhesive protein-protein and protein-carbohydrate interactions. Likely to be involved with polycystin-1-interacting protein 1 in the detection, sequestration and exocytosis of senescent mitochondria. The chain is Polycystin-1 from Mus musculus (Mouse).